A 356-amino-acid chain; its full sequence is DNA-directed RNA polymerase subunit alpha (356 aa).

The tract at residues 1–230 (MNLHRISSEP…DLLKPLLKVE (230 aa)) is alpha N-terminal domain (alpha-NTD). Residues 267 to 356 (IDQPLLPADS…IRKSYGHILG (90 aa)) are alpha C-terminal domain (alpha-CTD).

It belongs to the RNA polymerase alpha chain family. In plastids the minimal PEP RNA polymerase catalytic core is composed of four subunits: alpha, beta, beta', and beta''. When a (nuclear-encoded) sigma factor is associated with the core the holoenzyme is formed, which can initiate transcription.

Its subcellular location is the plastid. It localises to the chloroplast. The enzyme catalyses RNA(n) + a ribonucleoside 5'-triphosphate = RNA(n+1) + diphosphate. DNA-dependent RNA polymerase catalyzes the transcription of DNA into RNA using the four ribonucleoside triphosphates as substrates. The polypeptide is DNA-directed RNA polymerase subunit alpha (Zygnema circumcarinatum (Green alga)).